Here is a 633-residue protein sequence, read N- to C-terminus: DNA topoisomerase 1 (633 aa).

The region spanning 6–115 (KKYIVVESPA…KNRIVFSEIT (110 aa)) is the Toprim domain. Residues E12 and D84 each coordinate Mg(2+). A Topo IA-type catalytic domain is found at 130–543 (DMKKVRAQLA…EFYESFSSVF (414 aa)). An interaction with DNA region spans residues 164–169 (SAGRVQ). The O-(5'-phospho-DNA)-tyrosine intermediate role is filled by Y288. 2 cysteine pairs are disulfide-bonded: C559–C578 and C561–C580. The C4-type zinc finger occupies 559–580 (CSCGKEMRLSFGKYGFYLKCEC). The interval 601 to 633 (LGRKDSESGSPDGRSVEGKGNLSEKRRKGKKGS) is disordered.

This sequence belongs to the type IA topoisomerase family. Monomer. It depends on Mg(2+) as a cofactor.

It carries out the reaction ATP-independent breakage of single-stranded DNA, followed by passage and rejoining.. Releases the supercoiling and torsional tension of DNA, which is introduced during the DNA replication and transcription, by transiently cleaving and rejoining one strand of the DNA duplex. Introduces a single-strand break via transesterification at a target site in duplex DNA. The scissile phosphodiester is attacked by the catalytic tyrosine of the enzyme, resulting in the formation of a DNA-(5'-phosphotyrosyl)-enzyme intermediate and the expulsion of a 3'-OH DNA strand. The free DNA strand then undergoes passage around the unbroken strand, thus removing DNA supercoils. Finally, in the religation step, the DNA 3'-OH attacks the covalent intermediate to expel the active-site tyrosine and restore the DNA phosphodiester backbone. In Thermotoga maritima (strain ATCC 43589 / DSM 3109 / JCM 10099 / NBRC 100826 / MSB8), this protein is DNA topoisomerase 1.